The chain runs to 489 residues: MTHCINGQWLAGEGETVIKTDPVSGEVLWQGRGASAAQVAAACEAARGAFPAWARQPFAERQAIVEKFAALLDTNRVELSEAIARETGKPRWETQTEVQAMINKVAISLRAWHVRCPEQVEGESSVRHRPHGVMAVFGPYNFPGHLPNGHIVPALLAGNCVLFKPSELTPLTAEIAMRLWNHAGLPQGVLHLLQGGRETGQALVQQPQVDGILFTGSAATGYQLHRQLAGQPEKMLALEMGGNNALIVEDPDDIDAAVHIAIQSAFISAGQRCTCARRLLVRRGAAGDAFLARLAAVAATIRVGRWNDEPQPFMGSVISPQAAEKIYAEWQARIDAGGNVLLPMCWPERSSALLTPGIIDVTEVRDLPDEEIFGPLLQVMRYDDFTHAIQLANDTRYGLACGLISPQREKFDRLLVEARAGIVNWNKPLTGAASTAPFGGVGASGNHRPSAWYAADYCAWPMASLASADLSLPDTLSPGLDFSVNKEAE.

216-221 (GSAATG) is a binding site for NAD(+). Active-site residues include Glu-239 and Cys-273.

The protein belongs to the aldehyde dehydrogenase family. AstD subfamily.

It carries out the reaction N-succinyl-L-glutamate 5-semialdehyde + NAD(+) + H2O = N-succinyl-L-glutamate + NADH + 2 H(+). The protein operates within amino-acid degradation; L-arginine degradation via AST pathway; L-glutamate and succinate from L-arginine: step 4/5. Its function is as follows. Catalyzes the NAD-dependent reduction of succinylglutamate semialdehyde into succinylglutamate. This is N-succinylglutamate 5-semialdehyde dehydrogenase from Erwinia tasmaniensis (strain DSM 17950 / CFBP 7177 / CIP 109463 / NCPPB 4357 / Et1/99).